We begin with the raw amino-acid sequence, 142 residues long: MKTFSAKPHEVQRDWFVVDGTDKVLGRLAAEVARRLRGKHKAIYTPHVDTGDYIVVVNVDKLRVTGNKALDKKYYRHSGYPGGIYETNFTKLQQRFPERVLEKAVKGMLPKGPLGYAMLKKLKCYAGAEHPHAAQQPKVLEI.

Belongs to the universal ribosomal protein uL13 family. Part of the 50S ribosomal subunit.

In terms of biological role, this protein is one of the early assembly proteins of the 50S ribosomal subunit, although it is not seen to bind rRNA by itself. It is important during the early stages of 50S assembly. The sequence is that of Large ribosomal subunit protein uL13 from Azoarcus sp. (strain BH72).